The following is an 86-amino-acid chain: Large ribosomal subunit protein bL27 (86 aa).

A disordered region spans residues 1-24; the sequence is MAHKKAGGSTRNGRDSESKRLGVK.

Belongs to the bacterial ribosomal protein bL27 family.

In Alcanivorax borkumensis (strain ATCC 700651 / DSM 11573 / NCIMB 13689 / SK2), this protein is Large ribosomal subunit protein bL27.